Consider the following 697-residue polypeptide: Potassium-transporting ATPase ATP-binding subunit (697 aa).

A run of 4 helical transmembrane segments spans residues 55-75, 79-99, 245-265, and 271-291; these read PIMF…FFPS, SIPG…VLFA, LTLI…YLGF, and VLVA…LSAI. Residue Asp324 is the 4-aspartylphosphate intermediate of the active site. Residues Asp361, Glu365, 393 to 400, and Lys412 each bind ATP; that span reads FKAETRMS. Positions 535 and 539 each coordinate Mg(2+). 3 helical membrane passes run 605-625, 633-653, and 677-697; these read FAII…LNIM, AILS…PLAM, and GGVI…GLFI.

This sequence belongs to the cation transport ATPase (P-type) (TC 3.A.3) family. Type IA subfamily. As to quaternary structure, the system is composed of three essential subunits: KdpA, KdpB and KdpC.

The protein resides in the cell membrane. It catalyses the reaction K(+)(out) + ATP + H2O = K(+)(in) + ADP + phosphate + H(+). Its function is as follows. Part of the high-affinity ATP-driven potassium transport (or Kdp) system, which catalyzes the hydrolysis of ATP coupled with the electrogenic transport of potassium into the cytoplasm. This subunit is responsible for energy coupling to the transport system and for the release of the potassium ions to the cytoplasm. This Bacillus cereus (strain AH820) protein is Potassium-transporting ATPase ATP-binding subunit.